The sequence spans 93 residues: Aspartyl/glutamyl-tRNA(Asn/Gln) amidotransferase subunit C (93 aa).

Belongs to the GatC family. Heterotrimer of A, B and C subunits.

It catalyses the reaction L-glutamyl-tRNA(Gln) + L-glutamine + ATP + H2O = L-glutaminyl-tRNA(Gln) + L-glutamate + ADP + phosphate + H(+). The catalysed reaction is L-aspartyl-tRNA(Asn) + L-glutamine + ATP + H2O = L-asparaginyl-tRNA(Asn) + L-glutamate + ADP + phosphate + 2 H(+). In terms of biological role, allows the formation of correctly charged Asn-tRNA(Asn) or Gln-tRNA(Gln) through the transamidation of misacylated Asp-tRNA(Asn) or Glu-tRNA(Gln) in organisms which lack either or both of asparaginyl-tRNA or glutaminyl-tRNA synthetases. The reaction takes place in the presence of glutamine and ATP through an activated phospho-Asp-tRNA(Asn) or phospho-Glu-tRNA(Gln). This chain is Aspartyl/glutamyl-tRNA(Asn/Gln) amidotransferase subunit C, found in Helicobacter pylori (strain HPAG1).